A 189-amino-acid polypeptide reads, in one-letter code: Probable DNA-directed RNA polymerase subunit delta (189 aa).

The 68-residue stretch at 14 to 81 folds into the HTH HARE-type domain; sequence LSMIEVAHAI…GENVWALRTW (68 aa). Composition is skewed to acidic residues over residues 90-100 and 118-189; these read EVDHPEDDGDE and EGDD…EDEE. Residues 90–189 form a disordered region; that stretch reads EVDHPEDDGD…DDLDDDEDEE (100 aa).

This sequence belongs to the RpoE family. In terms of assembly, RNAP is composed of a core of 2 alpha, a beta and a beta' subunits. The core is associated with a delta subunit and one of several sigma factors.

Participates in both the initiation and recycling phases of transcription. In the presence of the delta subunit, RNAP displays an increased specificity of transcription, a decreased affinity for nucleic acids, and an increased efficiency of RNA synthesis because of enhanced recycling. This is Probable DNA-directed RNA polymerase subunit delta from Lactobacillus delbrueckii subsp. bulgaricus (strain ATCC BAA-365 / Lb-18).